The chain runs to 330 residues: 2-phospho-L-lactate transferase (330 aa).

Position 49 (D49) interacts with 7,8-didemethyl-8-hydroxy-5-deazariboflavin.

The protein belongs to the CofD family. As to quaternary structure, homodimer. Mg(2+) is required as a cofactor.

It catalyses the reaction (2S)-lactyl-2-diphospho-5'-guanosine + 7,8-didemethyl-8-hydroxy-5-deazariboflavin = oxidized coenzyme F420-0 + GMP + H(+). It functions in the pathway cofactor biosynthesis; coenzyme F420 biosynthesis. Functionally, catalyzes the transfer of the 2-phospholactate moiety from (2S)-lactyl-2-diphospho-5'-guanosine to 7,8-didemethyl-8-hydroxy-5-deazariboflavin (FO) with the formation of oxidized coenzyme F420-0 and GMP. This is 2-phospho-L-lactate transferase from Haloarcula marismortui (strain ATCC 43049 / DSM 3752 / JCM 8966 / VKM B-1809) (Halobacterium marismortui).